The chain runs to 863 residues: Leucine--tRNA ligase (863 aa).

A 'HIGH' region motif is present at residues 42-53 (PYPSGSGLHVGH). The 'KMSKS' region signature appears at 635 to 639 (KMSKS). K638 lines the ATP pocket.

The protein belongs to the class-I aminoacyl-tRNA synthetase family.

It localises to the cytoplasm. It carries out the reaction tRNA(Leu) + L-leucine + ATP = L-leucyl-tRNA(Leu) + AMP + diphosphate. In Salinibacter ruber (strain DSM 13855 / M31), this protein is Leucine--tRNA ligase.